A 306-amino-acid chain; its full sequence is Ribosomal RNA small subunit methyltransferase H (306 aa).

Residues Gly-37 to His-39, Asp-56, Asp-102, and Gln-109 each bind S-adenosyl-L-methionine.

The protein belongs to the methyltransferase superfamily. RsmH family.

The protein resides in the cytoplasm. The enzyme catalyses cytidine(1402) in 16S rRNA + S-adenosyl-L-methionine = N(4)-methylcytidine(1402) in 16S rRNA + S-adenosyl-L-homocysteine + H(+). In terms of biological role, specifically methylates the N4 position of cytidine in position 1402 (C1402) of 16S rRNA. This chain is Ribosomal RNA small subunit methyltransferase H, found in Nautilia profundicola (strain ATCC BAA-1463 / DSM 18972 / AmH).